Reading from the N-terminus, the 100-residue chain is NADH-quinone oxidoreductase subunit K (100 aa).

3 helical membrane passes run 4-24 (VTWYLWLAAMLFTIGLSGVLL), 29-49 (LIVMMSVELMLNAANLTFLAF), and 61-81 (IAFFVIAVAAAEAAVGLAVVI).

It belongs to the complex I subunit 4L family. NDH-1 is composed of 14 different subunits. Subunits NuoA, H, J, K, L, M, N constitute the membrane sector of the complex.

It is found in the cell inner membrane. The catalysed reaction is a quinone + NADH + 5 H(+)(in) = a quinol + NAD(+) + 4 H(+)(out). In terms of biological role, NDH-1 shuttles electrons from NADH, via FMN and iron-sulfur (Fe-S) centers, to quinones in the respiratory chain. The immediate electron acceptor for the enzyme in this species is believed to be ubiquinone. Couples the redox reaction to proton translocation (for every two electrons transferred, four hydrogen ions are translocated across the cytoplasmic membrane), and thus conserves the redox energy in a proton gradient. This chain is NADH-quinone oxidoreductase subunit K, found in Anaeromyxobacter sp. (strain Fw109-5).